Reading from the N-terminus, the 342-residue chain is Predicted GPI-anchored protein 54 (342 aa).

Residues 1-16 form the signal peptide; sequence MRANYLLLLAATAVQA. N25, N105, and N151 each carry an N-linked (GlcNAc...) asparagine glycan. G314 carries GPI-anchor amidated glycine lipidation. Positions 315 to 342 are cleaved as a propeptide — removed in mature form; the sequence is ASQSHPISSYSNYTISDYAPPISSYYSL. N326 carries an N-linked (GlcNAc...) asparagine glycan.

It localises to the cell membrane. This is Predicted GPI-anchored protein 54 (PGA54) from Candida albicans (strain SC5314 / ATCC MYA-2876) (Yeast).